Reading from the N-terminus, the 141-residue chain is Large ribosomal subunit protein bL21 (141 aa).

Residues 111–141 are disordered; that stretch reads ATAPSRTEAAPESNPEAAPSAAATGIPADEE. Low complexity predominate over residues 118–133; that stretch reads EAAPESNPEAAPSAAA.

This sequence belongs to the bacterial ribosomal protein bL21 family. As to quaternary structure, part of the 50S ribosomal subunit. Contacts protein L20.

Functionally, this protein binds to 23S rRNA in the presence of protein L20. The protein is Large ribosomal subunit protein bL21 of Synechococcus sp. (strain JA-2-3B'a(2-13)) (Cyanobacteria bacterium Yellowstone B-Prime).